The chain runs to 953 residues: 26S proteasome non-ATPase regulatory subunit 1 (953 aa).

An N-acetylmethionine modification is found at Met1. The residue at position 273 (Thr273) is a Phosphothreonine. The disordered stretch occupies residues 277–319 (SVPGSTNTGTVPGPEKDSDSMETEEKTAGAVAGKTPDASPEPK). A compositionally biased stretch (basic and acidic residues) spans 290 to 303 (PEKDSDSMETEEKT). At Lys310 the chain carries N6-acetyllysine. The residue at position 311 (Thr311) is a Phosphothreonine. Residue Ser315 is modified to Phosphoserine. 10 PC repeats span residues 403–436 (TATA…PGSA), 441–474 (GGLY…DIVR), 476–510 (GGSL…VTGE), 511–545 (AAGL…EKIL), 547–580 (GLAV…ILRR), 581–616 (SGMY…DVRR), 617–649 (AAVE…PHVR), 651–685 (GAAM…YVRQ), 686–726 (GALI…DVMA), and 729–761 (GAIL…PSVV). Lys720 is modified (N6-acetyllysine). A Phosphothreonine modification is found at Thr830. Ser834 is subject to Phosphoserine. Disordered regions lie at residues 839 to 881 (AKKK…LDNP) and 930 to 953 (AHGP…YIDD). 2 stretches are compositionally biased toward basic and acidic residues: residues 842–852 (KEKEKEKKEEE) and 859–872 (AEKK…KEPE). Residues 936-953 (EEEEQEPEPPEPFEYIDD) are compositionally biased toward acidic residues.

It belongs to the proteasome subunit S1 family. As to quaternary structure, component of the 19S proteasome regulatory particle complex. The 26S proteasome consists of a 20S core particle (CP) and two 19S regulatory subunits (RP). The regulatory particle is made of a lid composed of 9 subunits, a base containing 6 ATPases and few additional components including PSMD1. Interacts with ADRM1. Interacts with ZFAND1.

Functionally, component of the 26S proteasome, a multiprotein complex involved in the ATP-dependent degradation of ubiquitinated proteins. This complex plays a key role in the maintenance of protein homeostasis by removing misfolded or damaged proteins, which could impair cellular functions, and by removing proteins whose functions are no longer required. Therefore, the proteasome participates in numerous cellular processes, including cell cycle progression, apoptosis, or DNA damage repair. The chain is 26S proteasome non-ATPase regulatory subunit 1 (Psmd1) from Rattus norvegicus (Rat).